The sequence spans 125 residues: Small ribosomal subunit protein uS12 (125 aa).

Asp-89 is subject to 3-methylthioaspartic acid.

The protein belongs to the universal ribosomal protein uS12 family. In terms of assembly, part of the 30S ribosomal subunit. Contacts proteins S8 and S17. May interact with IF1 in the 30S initiation complex.

Functionally, with S4 and S5 plays an important role in translational accuracy. Interacts with and stabilizes bases of the 16S rRNA that are involved in tRNA selection in the A site and with the mRNA backbone. Located at the interface of the 30S and 50S subunits, it traverses the body of the 30S subunit contacting proteins on the other side and probably holding the rRNA structure together. The combined cluster of proteins S8, S12 and S17 appears to hold together the shoulder and platform of the 30S subunit. The protein is Small ribosomal subunit protein uS12 of Cupriavidus necator (strain ATCC 17699 / DSM 428 / KCTC 22496 / NCIMB 10442 / H16 / Stanier 337) (Ralstonia eutropha).